A 450-amino-acid chain; its full sequence is ADP-specific phosphofructokinase (450 aa).

The ADPK domain occupies 1 to 449 (MIPEHLSIYT…FLTYLEFLKR (449 aa)). 3 residues coordinate Mg(2+): E260, E290, and D433. Catalysis depends on D433, which acts as the Proton acceptor.

Belongs to the carbohydrate kinase PfkC family. The cofactor is Mg(2+).

It is found in the cytoplasm. The catalysed reaction is beta-D-fructose 6-phosphate + ADP = beta-D-fructose 1,6-bisphosphate + AMP + H(+). It functions in the pathway carbohydrate degradation; glycolysis. Its function is as follows. Catalyzes the phosphorylation of fructose 6-phosphate to fructose 1,6-bisphosphate using ADP as the phosphate donor. In Pyrococcus horikoshii (strain ATCC 700860 / DSM 12428 / JCM 9974 / NBRC 100139 / OT-3), this protein is ADP-specific phosphofructokinase.